The chain runs to 151 residues: MTGLERQLTEMLEAPVEASGYELVGLEFIRAGAHSTLRIYIDHENGINVDDCAEVSHQVSAVLDVEDPISVAYSLEVSSPGLERPLFKAAHYEQFIGHEVSIVLKMAVANRRKWKGIIHGVDGETVTVTVEGQQEEFALSNISKANLIPKF.

This sequence belongs to the RimP family.

The protein localises to the cytoplasm. In terms of biological role, required for maturation of 30S ribosomal subunits. The protein is Ribosome maturation factor RimP of Vibrio parahaemolyticus serotype O3:K6 (strain RIMD 2210633).